Consider the following 279-residue polypeptide: Probable endonuclease 4 (279 aa).

9 residues coordinate Zn(2+): histidine 74, histidine 112, glutamate 147, aspartate 180, histidine 183, histidine 214, aspartate 227, histidine 229, and glutamate 259.

Belongs to the AP endonuclease 2 family. The cofactor is Zn(2+).

The enzyme catalyses Endonucleolytic cleavage to 5'-phosphooligonucleotide end-products.. In terms of biological role, endonuclease IV plays a role in DNA repair. It cleaves phosphodiester bonds at apurinic or apyrimidinic (AP) sites, generating a 3'-hydroxyl group and a 5'-terminal sugar phosphate. The chain is Probable endonuclease 4 from Mycoplasma mobile (strain ATCC 43663 / 163K / NCTC 11711) (Mesomycoplasma mobile).